A 199-amino-acid chain; its full sequence is dITP/XTP pyrophosphatase (199 aa).

8–13 (TSNKNK) serves as a coordination point for substrate. Residues glutamate 40 and aspartate 68 each coordinate Mg(2+). The Proton acceptor role is filled by aspartate 68. Residues serine 69, 154-157 (FGYD), lysine 177, and 182-183 (HR) each bind substrate.

Belongs to the HAM1 NTPase family. As to quaternary structure, homodimer. Mg(2+) is required as a cofactor.

The enzyme catalyses XTP + H2O = XMP + diphosphate + H(+). The catalysed reaction is dITP + H2O = dIMP + diphosphate + H(+). It catalyses the reaction ITP + H2O = IMP + diphosphate + H(+). Its function is as follows. Pyrophosphatase that catalyzes the hydrolysis of nucleoside triphosphates to their monophosphate derivatives, with a high preference for the non-canonical purine nucleotides XTP (xanthosine triphosphate), dITP (deoxyinosine triphosphate) and ITP. Seems to function as a house-cleaning enzyme that removes non-canonical purine nucleotides from the nucleotide pool, thus preventing their incorporation into DNA/RNA and avoiding chromosomal lesions. The chain is dITP/XTP pyrophosphatase from Wigglesworthia glossinidia brevipalpis.